A 243-amino-acid chain; its full sequence is MNRIKAVGYENNELKEKAQLLADQLNLQLDQNADTCLFVTSEKLTLKIRNFSLMFADFSAMTWSKRRGEGKRQGLIRACKPTKGIKILDATAGWGKDAAILATFGADVLMLERHPVMAALLTDALSRRNEADIQKICLSLIASDAISFLHSLQEKDYPDIIYIDPMHPERNKSALVKKEMQVLQQLIGTDHDAMELIELSLSHVKSRVVVKWPQKVKPLLPPDASIDGKTVRFDIYMPQFSSN.

Residues 112–113 and Asp-164 contribute to the S-adenosyl-L-methionine site; that span reads ER.

Belongs to the methyltransferase superfamily. RsmJ family.

The protein resides in the cytoplasm. The enzyme catalyses guanosine(1516) in 16S rRNA + S-adenosyl-L-methionine = N(2)-methylguanosine(1516) in 16S rRNA + S-adenosyl-L-homocysteine + H(+). Its function is as follows. Specifically methylates the guanosine in position 1516 of 16S rRNA. In Legionella pneumophila (strain Lens), this protein is Ribosomal RNA small subunit methyltransferase J.